Consider the following 199-residue polypeptide: NADH-quinone oxidoreductase subunit C (199 aa).

The protein belongs to the complex I 30 kDa subunit family. As to quaternary structure, NDH-1 is composed of 14 different subunits. Subunits NuoB, C, D, E, F, and G constitute the peripheral sector of the complex.

The protein resides in the cell inner membrane. The enzyme catalyses a quinone + NADH + 5 H(+)(in) = a quinol + NAD(+) + 4 H(+)(out). In terms of biological role, NDH-1 shuttles electrons from NADH, via FMN and iron-sulfur (Fe-S) centers, to quinones in the respiratory chain. The immediate electron acceptor for the enzyme in this species is believed to be ubiquinone. Couples the redox reaction to proton translocation (for every two electrons transferred, four hydrogen ions are translocated across the cytoplasmic membrane), and thus conserves the redox energy in a proton gradient. The chain is NADH-quinone oxidoreductase subunit C from Leptothrix cholodnii (strain ATCC 51168 / LMG 8142 / SP-6) (Leptothrix discophora (strain SP-6)).